The sequence spans 379 residues: Armadillo repeat-containing X-linked protein 3 (379 aa).

The Mitochondrial intermembrane segment spans residues 1-6 (MGYARK). Mitochondrion outer membrane (MOM)-targeting sequence regions lie at residues 1-6 (MGYARK) and 26-37 (RLTRGRKQNKEK). Residues 7-29 (VGWVTAGLVIGAGACYCIYRLTR) form a helical; Signal-anchor membrane-spanning segment. Residues 30–379 (GRKQNKEKMA…AEHMFPKSQE (350 aa)) are Cytoplasmic-facing. Phosphoserine occurs at positions 61, 67, and 72. Positions 89-98 (RARARARARA) are nuclear localization signal. A compositionally biased stretch (basic residues) spans 95–106 (RARATRARRAVQ). The segment at 95 to 116 (RARATRARRAVQKRASPNSDDT) is disordered. At Ser-110 the chain carries Phosphoserine. ARM repeat units lie at residues 111–151 (PNSD…NNAA), 153–192 (AFNR…NLSV), and 233–272 (VTNE…NLAE).

It belongs to the eutherian X-chromosome-specific Armcx family. As to quaternary structure, interacts (via ARM domain) with MIRO1, MIRO2 and TRAK2. The interaction with Miro is calcium-dependent. Interacts with SOX10.

The protein localises to the mitochondrion outer membrane. It localises to the cytoplasm. The protein resides in the nucleus. Regulates mitochondrial aggregation and transport in axons in living neurons. May link mitochondria to the TRAK2-kinesin motor complex via its interaction with Miro and TRAK2. Mitochondrial distribution and dynamics is regulated through ARMCX3 protein degradation, which is promoted by PCK and negatively regulated by WNT1. Enhances the SOX10-mediated transactivation of the neuronal acetylcholine receptor subunit alpha-3 and beta-4 subunit gene promoters. The chain is Armadillo repeat-containing X-linked protein 3 (ARMCX3) from Homo sapiens (Human).